A 497-amino-acid polypeptide reads, in one-letter code: MTPAAERRPLLPFGYARAHSVMLLSSGESCEVFCLAVTAPQALLEARRVAAMPFRLERLEEEAFEKLLVLSYQRDSAEARRMMADIGNELDLYTLAEELPDTDDLLDSEDDAPIIRLINAMLTEAIKEKASDIHIETYERHLQIRFRVDGVLREILRPQRRLAALLISRIKVMASLDIAEKRIPQDGRMALRIGGRAVDVRVSTLPSSYGERVVLRLLDKNSVNLDLLTLGMTPALLRQVDGLIARPHGIVLVTGPTGSGKSTTLYAALSRLDARERNIMTIEDPIEYELEGIGQTQVNAKVDMTFARGLRAILRQDPDVVLVGEIRDGETAQIAVQASLTGHLVLSTLHTNSALGAISRLQDMGVEPFLLSTSLLAVMSQRLVRRLCPHCRQQEPANADTAHQMEIAPGTALWQPRGCAECGFTGYRGRTGIHELLLVDDRVRMAIHRGENEVTLIQQLGTDYMTLRRAGREKALAGITSWQEVLRVTEQPIAEAC.

An ATP-binding site is contributed by 255–262 (GPTGSGKS). Zn(2+) contacts are provided by Cys388, Cys391, Cys419, and Cys422.

Belongs to the GSP E family. In terms of assembly, forms homooligomers; most probably hexamers. Interacts with PulL/GspL. The cofactor is Zn(2+).

The protein localises to the cell inner membrane. The enzyme catalyses ATP + H2O + cellular proteinSide 1 = ADP + phosphate + cellular proteinSide 2.. In terms of biological role, ATPase component of the type II secretion system required for the energy-dependent secretion of extracellular factors such as proteases and toxins from the periplasm. Acts as a molecular motor to provide the energy that is required for assembly of the pseudopilus and the extrusion of substrates generated in the cytoplasm. This is Type II secretion system protein E (pulE) from Klebsiella pneumoniae.